Here is a 685-residue protein sequence, read N- to C-terminus: Serotransferrin (685 aa).

The N-terminal stretch at 1 to 16 (MKPLLLLPLLGCLATI) is a signal peptide. Transferrin-like domains follow at residues 23–329 (VKWC…ALKI) and 340–666 (MKWC…SLRT). A disulfide bridge links cysteine 26 with cysteine 48. Fe(3+) contacts are provided by aspartate 72 and tyrosine 102. Disulfide bonds link cysteine 125–cysteine 206, cysteine 170–cysteine 184, and cysteine 234–cysteine 248. The hydrogencarbonate site is built by threonine 127, lysine 131, alanine 133, and glycine 134. Tyrosine 200 provides a ligand contact to Fe(3+). Histidine 256 lines the Fe(3+) pocket. 2 cysteine pairs are disulfide-bonded: cysteine 343–cysteine 379 and cysteine 353–cysteine 370. Fe(3+) contacts are provided by aspartate 394 and tyrosine 428. 7 cysteine pairs are disulfide-bonded: cysteine 404–cysteine 678, cysteine 419–cysteine 639, cysteine 451–cysteine 526, cysteine 475–cysteine 667, cysteine 485–cysteine 499, cysteine 496–cysteine 509, and cysteine 566–cysteine 580. Residues threonine 453, arginine 457, alanine 459, and glycine 460 each contribute to the hydrogencarbonate site. Asparagine 476 is a glycosylation site (N-linked (GlcNAc...) asparagine). Fe(3+) is bound at residue tyrosine 520. Histidine 588 contacts Fe(3+).

The protein belongs to the transferrin family. In terms of assembly, monomer.

The protein localises to the secreted. In terms of biological role, transferrins are iron binding transport proteins which can bind two Fe(3+) ions in association with the binding of an anion, usually bicarbonate. This Paralichthys olivaceus (Bastard halibut) protein is Serotransferrin (tf).